The chain runs to 394 residues: Shematrin-like protein 2 (394 aa).

Positions 1 to 19 (MKPFISLASLIVLIASASA) are cleaved as a signal peptide.

In terms of tissue distribution, prismatic layer of shell (at protein level). Expressed primarily in the mantle with highest level in the mantle edge and lower level in the mantle pallium.

Its subcellular location is the secreted. The chain is Shematrin-like protein 2 from Pinctada maxima (Silver-lipped pearl oyster).